The primary structure comprises 366 residues: MSKRDYYEVLGVSKSASKDEIKKAYRRLAKKYHPDVSKEENAVEKFKEVQEAYEVLSDEQKRAQYDQFGHAGSSQGFGGGDFGGGFGFEDIFSSFFGGGSRRRDPNAPRQGADLQYQVTLEFEEAIFGKELNVEIPVEDPCDTCHGSGAKPGTTKETCKYCSGTGQISVEQNTPFGRIVNRQTCRHCSGTGQMIKEKCTTCHGTGKVRKRKKINVKIPAGIDNGQQIRVAGKGEAGVNGGPAGDLYVVVHVREHEFFERDGDHIICEMPLTFAQAALGAEVEVPTVHGKVKLKIPAGTQTGTEFRLKGKGAPNVRGYGQGDQYVVVRVVVPTNLTAHQKELLREFAGQEDKDDSLFGKLKRAFKGE.

Residues 5–69 (DYYEVLGVSK…QKRAQYDQFG (65 aa)) enclose the J domain. Residues 128 to 210 (GKELNVEIPV…CHGTGKVRKR (83 aa)) form a CR-type zinc finger. The Zn(2+) site is built by cysteine 141, cysteine 144, cysteine 158, cysteine 161, cysteine 184, cysteine 187, cysteine 198, and cysteine 201. CXXCXGXG motif repeat units follow at residues 141–148 (CDTCHGSG), 158–165 (CKYCSGTG), 184–191 (CRHCSGTG), and 198–205 (CTTCHGTG).

The protein belongs to the DnaJ family. In terms of assembly, homodimer. It depends on Zn(2+) as a cofactor.

Its subcellular location is the cytoplasm. Its function is as follows. Participates actively in the response to hyperosmotic and heat shock by preventing the aggregation of stress-denatured proteins and by disaggregating proteins, also in an autonomous, DnaK-independent fashion. Unfolded proteins bind initially to DnaJ; upon interaction with the DnaJ-bound protein, DnaK hydrolyzes its bound ATP, resulting in the formation of a stable complex. GrpE releases ADP from DnaK; ATP binding to DnaK triggers the release of the substrate protein, thus completing the reaction cycle. Several rounds of ATP-dependent interactions between DnaJ, DnaK and GrpE are required for fully efficient folding. Also involved, together with DnaK and GrpE, in the DNA replication of plasmids through activation of initiation proteins. The protein is Chaperone protein DnaJ of Bacillus cytotoxicus (strain DSM 22905 / CIP 110041 / 391-98 / NVH 391-98).